Reading from the N-terminus, the 136-residue chain is Fluoride-specific ion channel FluC (136 aa).

Transmembrane regions (helical) follow at residues threonine 3–leucine 23, alanine 46–phenylalanine 66, leucine 78–valine 98, and phenylalanine 109–leucine 129. Residues glycine 86 and threonine 89 each coordinate Na(+).

The protein belongs to the fluoride channel Fluc/FEX (TC 1.A.43) family.

The protein localises to the cell inner membrane. The catalysed reaction is fluoride(in) = fluoride(out). Its activity is regulated as follows. Na(+) is not transported, but it plays an essential structural role and its presence is essential for fluoride channel function. Its function is as follows. Fluoride-specific ion channel. Important for reducing fluoride concentration in the cell, thus reducing its toxicity. The sequence is that of Fluoride-specific ion channel FluC from Erythrobacter litoralis (strain HTCC2594).